Consider the following 282-residue polypeptide: Nicotianamine synthase-like 5 protein (282 aa).

Belongs to the nicotianamine synthase (NAS)-like family.

The sequence is that of Nicotianamine synthase-like 5 protein (NAS5) from Hordeum vulgare (Barley).